A 357-amino-acid chain; its full sequence is Quinolinate synthase (357 aa).

Positions 50 and 71 each coordinate iminosuccinate. C116 contributes to the [4Fe-4S] cluster binding site. Residues 142 to 144 (YAN) and S159 each bind iminosuccinate. Residue C203 participates in [4Fe-4S] cluster binding. Iminosuccinate-binding positions include 229–231 (HPE) and T246. C300 serves as a coordination point for [4Fe-4S] cluster.

It belongs to the quinolinate synthase family. Type 1 subfamily. It depends on [4Fe-4S] cluster as a cofactor.

The protein localises to the cytoplasm. The catalysed reaction is iminosuccinate + dihydroxyacetone phosphate = quinolinate + phosphate + 2 H2O + H(+). Its pathway is cofactor biosynthesis; NAD(+) biosynthesis; quinolinate from iminoaspartate: step 1/1. In terms of biological role, catalyzes the condensation of iminoaspartate with dihydroxyacetone phosphate to form quinolinate. This Shewanella sp. (strain ANA-3) protein is Quinolinate synthase.